The primary structure comprises 154 residues: MIEVNIHTRGWYKLVGKPKTSAKRVIRFCLSELDITKYDPKVFVVLANDALLLELNSQYRGIHKATNVLSFSYEKLSPGCCLGEIYLSMERIAEESLEMDVAVRSHFFHMLIHGMLHILGYDHEEPEEAITMQALEVGLLAKLGIRNPYVPRET.

Histidine 113, histidine 117, and histidine 123 together coordinate Zn(2+).

It belongs to the endoribonuclease YbeY family. Zn(2+) serves as cofactor.

It is found in the cytoplasm. Single strand-specific metallo-endoribonuclease involved in late-stage 70S ribosome quality control and in maturation of the 3' terminus of the 16S rRNA. This is Endoribonuclease YbeY from Anaplasma marginale (strain Florida).